Consider the following 217-residue polypeptide: Ribosomal RNA small subunit methyltransferase G (217 aa).

S-adenosyl-L-methionine contacts are provided by residues G74, L79, 125–126, and R143; that span reads IQ.

It belongs to the methyltransferase superfamily. RNA methyltransferase RsmG family.

The protein localises to the cytoplasm. The enzyme catalyses guanosine(527) in 16S rRNA + S-adenosyl-L-methionine = N(7)-methylguanosine(527) in 16S rRNA + S-adenosyl-L-homocysteine. Specifically methylates the N7 position of guanine in position 527 of 16S rRNA. In Syntrophotalea carbinolica (strain DSM 2380 / NBRC 103641 / GraBd1) (Pelobacter carbinolicus), this protein is Ribosomal RNA small subunit methyltransferase G.